Consider the following 20-residue polypeptide: Pregnancy-associated glycoprotein 67A (20 aa).

N-linked (GlcNAc...) asparagine glycosylation is found at Asn-4 and Asn-20.

The protein belongs to the peptidase A1 family. Chorionic epithelium (trophectoderm) and placental cotyledons.

Its subcellular location is the secreted. It localises to the extracellular space. The sequence is that of Pregnancy-associated glycoprotein 67A from Bison bonasus (European bison).